The primary structure comprises 331 residues: N-arachidonyl glycine receptor (331 aa).

The Extracellular portion of the chain corresponds to 1–26 (MITLNNQDQPVPFNSSHPDEYKIAAL). The N-linked (GlcNAc...) asparagine glycan is linked to N14. A helical transmembrane segment spans residues 27–47 (VFYSCIFIIGLFVNITALWVF). At 48-56 (SCTTKKRTT) the chain is on the cytoplasmic side. A helical membrane pass occupies residues 57–77 (VTIYMMNVALVDLIFIMTLPF). Residues 78–95 (RMFYYAKDEWPFGEYFCQ) are Extracellular-facing. C94 and C172 are disulfide-bonded. A helical membrane pass occupies residues 96 to 116 (ILGALTVFYPSIALWLLAFIS). At 117–138 (ADRYMAIVQPKYAKELKNTCKA) the chain is on the cytoplasmic side. Residues 139–159 (VLACVGVWIMTLTTTTPLLLL) form a helical membrane-spanning segment. At 160–191 (YKDPDKDSTPATCLKISDIIYLKAVNVLNLTR) the chain is on the extracellular side. The helical transmembrane segment at 192-212 (LTFFFLIPLFIMIGCYLVIIH) threads the bilayer. Residues 213–232 (NLLHGRTSKLKPKVKEKSIR) are Cytoplasmic-facing. A helical transmembrane segment spans residues 233–253 (IIITLLVQVLVCFMPFHICFA). Residues 254–268 (FLMLGTGENSYNPWG) are Extracellular-facing. A helical membrane pass occupies residues 269–289 (AFTTFLMNLSTCLDVILYYIV). Over 290–331 (SKQFQARVISVMLYRNYLRSMRRKSFRSGSLRSLSNINSEML) the chain is Cytoplasmic. S322 bears the Phosphoserine mark.

It belongs to the G-protein coupled receptor 1 family. Expressed in midpiece of spermatozoon (at protein level). Most abundant in testis and spleen. Highly expressed in CD4 and CD8-positive T-cells as well as CD19-positive B-cells.

It localises to the cell membrane. It is found in the cytoplasmic vesicle membrane. Functionally, g protein-coupled receptor (GPCR) that plays a role in diverse physiological processes particularly within the immune and nervous systems. Becomes active when triggered by various endogenous ligands including endocannabinoid N-arachidonyl glycine (NAGly), delta-9-tetrahydrocannabinol or resolvin D2/RvD2 derived from the omega-3 fatty acid docosahexaenoic acid (DHA). Upon RvD2 binding, facilitates the resolution of inflammation, aiding in tissue repair and homeostasis. Mechanistically, RvD2 ligation initiates Galphas protein coupling, activation of cAMP-PKA signaling pathway and phosphorylation of STAT3, leading to RvD2-stimulated macrophage phagocytosis. Mediates NAGly-induced process of reorganization of actin filaments and induction of acrosomal exocytosis. Activation by N-arachidonoyl glycine (NAGly) can also induce apoptosis in macrophages. Plays a role in homeostasis of CD8+ subsets of intraepithelial lymphocytes (IELs) (CD8alphaalpha and CD8alphabeta IELs) in small intestine by supporting preferential migration of CD8alphaalpha T-cells to intraepithelial compartment over lamina propria compartment, and by mediating their reconstitution into small intestine after bone marrow transplant. Also participates in hypotensive responses, mediating reduction in intraocular and blood pressure. The sequence is that of N-arachidonyl glycine receptor (GPR18) from Homo sapiens (Human).